The primary structure comprises 198 residues: Glycerol-3-phosphate acyltransferase (198 aa).

The next 5 helical transmembrane spans lie at 2-22, 53-75, 79-98, 113-133, and 147-167; these read FITYLLLIVAYLLGSIPFALV, AGFIVTIADILKGTLATGLPLIF, IHPLLFGLAAVLGHVYPIFA, LLCYAPIIFAILAVVFFTLLF, and IAAVIASIVNGDKIFIVAMCL.

This sequence belongs to the PlsY family. As to quaternary structure, probably interacts with PlsX.

Its subcellular location is the cell membrane. The catalysed reaction is an acyl phosphate + sn-glycerol 3-phosphate = a 1-acyl-sn-glycero-3-phosphate + phosphate. It participates in lipid metabolism; phospholipid metabolism. Catalyzes the transfer of an acyl group from acyl-phosphate (acyl-PO(4)) to glycerol-3-phosphate (G3P) to form lysophosphatidic acid (LPA). This enzyme utilizes acyl-phosphate as fatty acyl donor, but not acyl-CoA or acyl-ACP. The polypeptide is Glycerol-3-phosphate acyltransferase (Bacillus cytotoxicus (strain DSM 22905 / CIP 110041 / 391-98 / NVH 391-98)).